Reading from the N-terminus, the 357-residue chain is Cholinesterase 1 (357 aa).

Ser-112 acts as the Acyl-ester intermediate in catalysis. An intrachain disulfide couples Cys-166 to Cys-179. Active-site charge relay system residues include Glu-244 and His-357.

It belongs to the type-B carboxylesterase/lipase family.

It carries out the reaction an acylcholine + H2O = a carboxylate + choline + H(+). The sequence is that of Cholinesterase 1 (CHE1) from Branchiostoma lanceolatum (Common lancelet).